The following is a 468-amino-acid chain: Monogalactosyldiacylglycerol synthase 2, chloroplastic (468 aa).

UDP-binding positions include histidine 82, arginine 251, 361–365, and glutamate 383; that span reads GTIAE.

This sequence belongs to the glycosyltransferase 28 family. Expressed mainly in floral buds. Detected in roots, leaves, stems, siliques and pollen tubes.

Its subcellular location is the plastid. The protein localises to the chloroplast outer membrane. The enzyme catalyses a 1,2-diacyl-sn-glycerol + UDP-alpha-D-galactose = a 1,2-diacyl-3-O-(beta-D-galactosyl)-sn-glycerol + UDP + H(+). The catalysed reaction is 1,2-di-(9Z,12Z-octadecadienoyl)-sn-glycerol + UDP-alpha-D-galactose = 1,2-di-(9Z,12Z-octadecadienoyl)-3-beta-D-galactosyl-sn-glycerol + UDP + H(+). It catalyses the reaction 1-(9Z-octadecenoyl)-2-hexadecanoyl-sn-glycerol + UDP-alpha-D-galactose = 1-(9Z-octadecenoyl)-2-hexadecanoyl-3-beta-D-galactosyl-sn-glycerol + UDP + H(+). It carries out the reaction 1,2-di-(9Z-octadecenoyl)-sn-glycerol + UDP-alpha-D-galactose = 1,2-di-(9Z-octadecenoyl)-3-beta-D-galactosyl-sn-glycerol + UDP + H(+). Inhibited by galvestine-1. Functionally, involved in the synthesis of monogalactosyldiacylglycerol, the major structural component of photosynthetic membranes and in the chloroplast envelope biogenesis. Can use both prokaryotic (18:1/16:0) or eukaryotic (18:2/18:2) 1,2-diacylglycerol species, but operates with some preference for the eukaryotic one. Plays a minor role in galactolipid synthesis in chloroplasts. Is required for membrane lipid remodeling in phosphate-starved roots. Acts as the minor factor involved in digalactosyldiacylglycerol (DGDG) biosynthesis in phosphate-starved roots. Does not seem to be required for plant growth under nutrient-sufficient conditions. Required for membrane lipid remodeling in plants grown in acidic conditions. In Arabidopsis thaliana (Mouse-ear cress), this protein is Monogalactosyldiacylglycerol synthase 2, chloroplastic.